A 249-amino-acid chain; its full sequence is 2,5-diamino-6-ribosylamino-4(3H)-pyrimidinone 5'-phosphate reductase (249 aa).

Residues threonine 79, aspartate 83, methionine 164, and glycine 187–isoleucine 191 contribute to the NADP(+) site.

It belongs to the HTP reductase family. As to quaternary structure, homodimer.

The catalysed reaction is 2,5-diamino-6-(1-D-ribitylamino)pyrimidin-4(3H)-one 5'-phosphate + NADP(+) = 2,5-diamino-6-(1-D-ribosylamino)pyrimidin-4(3H)-one 5'-phosphate + NADPH + H(+). It carries out the reaction 2,5-diamino-6-(1-D-ribitylamino)pyrimidin-4(3H)-one 5'-phosphate + NAD(+) = 2,5-diamino-6-(1-D-ribosylamino)pyrimidin-4(3H)-one 5'-phosphate + NADH + H(+). Its pathway is cofactor biosynthesis; riboflavin biosynthesis. In terms of biological role, catalyzes an early step in riboflavin biosynthesis, the NADPH-dependent reduction of the ribose side chain of 2,5-diamino-6-ribosylamino-4(3H)-pyrimidinone 5'-phosphate, yielding 2,5-diamino-6-ribitylamino-4(3H)-pyrimidinone 5'-phosphate. This Kluyveromyces marxianus (Yeast) protein is 2,5-diamino-6-ribosylamino-4(3H)-pyrimidinone 5'-phosphate reductase (RIB7).